The following is a 147-amino-acid chain: UPF0178 protein Nther_1836 (147 aa).

This sequence belongs to the UPF0178 family.

This is UPF0178 protein Nther_1836 from Natranaerobius thermophilus (strain ATCC BAA-1301 / DSM 18059 / JW/NM-WN-LF).